The primary structure comprises 78 residues: RNA-binding protein Hfq (78 aa).

Residues 10-69 (DPFLNALRKEHVPVSIYLVNGIKLQGNIESFDQYVVLLRNTVTQMVYKHAISTVVPARPV) enclose the Sm domain.

It belongs to the Hfq family. In terms of assembly, homohexamer.

Functionally, RNA chaperone that binds small regulatory RNA (sRNAs) and mRNAs to facilitate mRNA translational regulation in response to envelope stress, environmental stress and changes in metabolite concentrations. Also binds with high specificity to tRNAs. In Paraburkholderia phytofirmans (strain DSM 17436 / LMG 22146 / PsJN) (Burkholderia phytofirmans), this protein is RNA-binding protein Hfq.